The chain runs to 332 residues: Ribosomal RNA small subunit methyltransferase H (332 aa).

Residues 36-38, aspartate 54, phenylalanine 81, aspartate 102, and glutamine 109 contribute to the S-adenosyl-L-methionine site; that span reads GGY. A disordered region spans residues 295–322; sequence PRARSAKLRGAERTESPAHAAGDLPGWP.

It belongs to the methyltransferase superfamily. RsmH family.

It is found in the cytoplasm. It catalyses the reaction cytidine(1402) in 16S rRNA + S-adenosyl-L-methionine = N(4)-methylcytidine(1402) in 16S rRNA + S-adenosyl-L-homocysteine + H(+). Functionally, specifically methylates the N4 position of cytidine in position 1402 (C1402) of 16S rRNA. The protein is Ribosomal RNA small subunit methyltransferase H of Rhodopseudomonas palustris (strain ATCC BAA-98 / CGA009).